The sequence spans 776 residues: Mitochondrial intermediate peptidase (776 aa).

A mitochondrion-targeting transit peptide spans 1 to 38; sequence MLNSARTVLARHSARQLYRFRGCLVHQQRHRHQVQRTL. Position 560 (histidine 560) interacts with Zn(2+). Glutamate 561 is a catalytic residue. Histidine 564 and histidine 567 together coordinate Zn(2+).

This sequence belongs to the peptidase M3 family. Zn(2+) serves as cofactor.

It is found in the mitochondrion matrix. The enzyme catalyses Release of an N-terminal octapeptide as second stage of processing of some proteins imported into the mitochondrion.. Cleaves proteins, imported into the mitochondrion, to their mature size. While most mitochondrial precursor proteins are processed to the mature form in one step by mitochondrial processing peptidase (MPP), the sequential cleavage by MIP of an octapeptide after initial processing by MPP is a required step for a subgroup of nuclear-encoded precursor proteins destined for the matrix or the inner membrane. This Coprinopsis cinerea (strain Okayama-7 / 130 / ATCC MYA-4618 / FGSC 9003) (Inky cap fungus) protein is Mitochondrial intermediate peptidase (OCT1).